The sequence spans 100 residues: Urease subunit gamma (100 aa).

This sequence belongs to the urease gamma subunit family. In terms of assembly, heterotrimer of UreA (gamma), UreB (beta) and UreC (alpha) subunits. Three heterotrimers associate to form the active enzyme.

The protein resides in the cytoplasm. The catalysed reaction is urea + 2 H2O + H(+) = hydrogencarbonate + 2 NH4(+). It functions in the pathway nitrogen metabolism; urea degradation; CO(2) and NH(3) from urea (urease route): step 1/1. The sequence is that of Urease subunit gamma from Bradyrhizobium diazoefficiens (strain JCM 10833 / BCRC 13528 / IAM 13628 / NBRC 14792 / USDA 110).